A 449-amino-acid polypeptide reads, in one-letter code: Ribulose bisphosphate carboxylase large chain (449 aa).

The propeptide occupies M1–S2. P3 carries the N-acetylproline modification. K14 carries the post-translational modification N6,N6,N6-trimethyllysine. Residues N123 and T173 each coordinate substrate. K175 functions as the Proton acceptor in the catalytic mechanism. Position 177 (K177) interacts with substrate. 3 residues coordinate Mg(2+): K201, D203, and E204. K201 carries the post-translational modification N6-carboxylysine. H294 (proton acceptor) is an active-site residue. X295, H327, and S379 together coordinate substrate.

Belongs to the RuBisCO large chain family. Type I subfamily. Heterohexadecamer of 8 large chains and 8 small chains; disulfide-linked. The disulfide link is formed within the large subunit homodimers. Requires Mg(2+) as cofactor. Post-translationally, the disulfide bond which can form in the large chain dimeric partners within the hexadecamer appears to be associated with oxidative stress and protein turnover.

It is found in the plastid. Its subcellular location is the chloroplast. The enzyme catalyses 2 (2R)-3-phosphoglycerate + 2 H(+) = D-ribulose 1,5-bisphosphate + CO2 + H2O. The catalysed reaction is D-ribulose 1,5-bisphosphate + O2 = 2-phosphoglycolate + (2R)-3-phosphoglycerate + 2 H(+). Functionally, ruBisCO catalyzes two reactions: the carboxylation of D-ribulose 1,5-bisphosphate, the primary event in carbon dioxide fixation, as well as the oxidative fragmentation of the pentose substrate in the photorespiration process. Both reactions occur simultaneously and in competition at the same active site. The protein is Ribulose bisphosphate carboxylase large chain of Salacia pallescens.